The primary structure comprises 507 residues: MELTLSLLTIFLLFFALSGRCSDKNDFPEGFIFGSATSAYQWEGAFDEDGRKPSVWDTFLHTRNLSNGDITSDGYHKYKEDVKLMVETGLDAFRFSISWSRLIPNGRGPVNPKGLQFYKNFIQELVSHGIEPHVTLFHYDHPQYLEDEYGGWINRRIIQDFTAYANVCFREFGHHVKFWTTINEANIFTIGGYNDGITPPGRCSSPGRNCSSGNSSTEPYIVGHNLLLAHASASRLYKQKYKDMQGGSVGFSLFSLGFTPSTSSKDDDIAVQRAKDFYFGWMLEPFIFGDYPDEMKRTVGSRLPVFSKEESEQVKGSSDFIGIIHYLAASVTSIKIKPSISGNPDFYSDMGVSMTWTVLGNFSAFEYAVAPWAMESVLEYIKQSYGNPPIYILENGTPMKQDLQLQQKDTPRIEYLHAYIAAVLKSIRNGSDTRGYFIWSFMDLYELVKGYEFSFGLYSVNFSDPHRTRSPKLSAHWYSAFLKGNTTFLGSQGIMQMQSNFSSSASS.

The first 23 residues, 1–23, serve as a signal peptide directing secretion; that stretch reads MELTLSLLTIFLLFFALSGRCSD. Glutamine 41 is a binding site for a beta-D-glucoside. Asparagine 64 carries N-linked (GlcNAc...) asparagine glycosylation. A beta-D-glucoside is bound by residues histidine 138 and 183-184; that span reads NE. Glutamate 184 serves as the catalytic Proton donor. A disulfide bond links cysteine 203 and cysteine 210. Residues asparagine 209 and asparagine 214 are each glycosylated (N-linked (GlcNAc...) asparagine). Tyrosine 326 lines the a beta-D-glucoside pocket. The N-linked (GlcNAc...) asparagine glycan is linked to asparagine 361. Glutamate 394 lines the a beta-D-glucoside pocket. Catalysis depends on glutamate 394, which acts as the Nucleophile. N-linked (GlcNAc...) asparagine glycosylation is present at asparagine 429. Positions 439 and 455 each coordinate a beta-D-glucoside. N-linked (GlcNAc...) asparagine glycans are attached at residues asparagine 461, asparagine 485, and asparagine 500.

Belongs to the glycosyl hydrolase 1 family.

The catalysed reaction is Hydrolysis of terminal, non-reducing beta-D-glucosyl residues with release of beta-D-glucose.. This is Beta-glucosidase 3 from Arabidopsis thaliana (Mouse-ear cress).